The primary structure comprises 247 residues: Proteasome subunit alpha type-7-1 (247 aa).

It belongs to the peptidase T1A family. As to quaternary structure, the 26S proteasome consists of a 20S proteasome core and two 19S regulatory subunits. The 20S proteasome core is composed of 28 subunits that are arranged in four stacked rings, resulting in a barrel-shaped structure. The two end rings are each formed by seven alpha subunits, and the two central rings are each formed by seven beta subunits. The catalytic chamber with the active sites is on the inside of the barrel.

It localises to the cytoplasm. The protein localises to the nucleus. The proteasome is a multicatalytic proteinase complex which is characterized by its ability to cleave peptides with Arg, Phe, Tyr, Leu, and Glu adjacent to the leaving group at neutral or slightly basic pH. The proteasome has an ATP-dependent proteolytic activity. This chain is Proteasome subunit alpha type-7-1 (Pros28.1), found in Drosophila virilis (Fruit fly).